We begin with the raw amino-acid sequence, 454 residues long: Pyrimidine/purine nucleotide 5'-monophosphate nucleosidase (454 aa).

Belongs to the LOG family.

The enzyme catalyses a pyrimidine ribonucleoside 5'-phosphate + H2O = a pyrimidine nucleobase + D-ribose 5-phosphate. The catalysed reaction is AMP + H2O = adenine + D-ribose 5-phosphate. It carries out the reaction GMP + H2O = guanine + D-ribose 5-phosphate. It catalyses the reaction CMP + H2O = cytosine + D-ribose 5-phosphate. The enzyme catalyses IMP + H2O = hypoxanthine + D-ribose 5-phosphate. The catalysed reaction is UMP + H2O = D-ribose 5-phosphate + uracil. It carries out the reaction dTMP + H2O = 2-deoxy-D-ribose 5-phosphate + thymine. Its function is as follows. Catalyzes the hydrolysis of the N-glycosidic bond of diverse pyrimidine and purine nucleotide 5'-monophosphates, to form ribose 5-phosphate and the corresponding free base. Can use AMP, GMP, IMP, CMP, dTMP and UMP as substrates. Cannot catalyze the reverse reactions. May contribute to nucleoside pool homeostasis by degrading excess nucleotides and feeding back the ribose moiety to catabolism. The sequence is that of Pyrimidine/purine nucleotide 5'-monophosphate nucleosidase from Escherichia coli O157:H7.